Consider the following 171-residue polypeptide: Co-chaperone protein HscB (171 aa).

Positions 2–74 (DYFTLFGLPA…LTRAEYLLSL (73 aa)) constitute a J domain.

Belongs to the HscB family. In terms of assembly, interacts with HscA and stimulates its ATPase activity. Interacts with IscU.

In terms of biological role, co-chaperone involved in the maturation of iron-sulfur cluster-containing proteins. Seems to help targeting proteins to be folded toward HscA. This Salmonella heidelberg (strain SL476) protein is Co-chaperone protein HscB.